The primary structure comprises 453 residues: GTPase Der (453 aa).

EngA-type G domains are found at residues 3–167 (PIIV…ISEK) and 187–360 (IKVA…EDSK). Residues 9 to 16 (GRTNVGKS), 57 to 61 (DTAGL), 119 to 122 (NKID), 193 to 200 (GRPNVGKS), 240 to 244 (DTAGA), and 305 to 308 (NKCD) contribute to the GTP site. The KH-like domain occupies 361 to 445 (RKISTSTLIR…PIQIQFKDNE (85 aa)).

It belongs to the TRAFAC class TrmE-Era-EngA-EngB-Septin-like GTPase superfamily. EngA (Der) GTPase family. In terms of assembly, associates with the 50S ribosomal subunit.

GTPase that plays an essential role in the late steps of ribosome biogenesis. This Buchnera aphidicola subsp. Acyrthosiphon pisum (strain Tuc7) protein is GTPase Der.